The sequence spans 251 residues: tRNA (guanine-N(7)-)-methyltransferase (251 aa).

The segment at 1 to 29 (MTQTLSSQDPQAPAAPPMPGAAGSAPADV) is disordered. The S-adenosyl-L-methionine site is built by glutamate 84, glutamate 109, aspartate 136, and aspartate 159. The active site involves aspartate 159. Lysine 163 lines the substrate pocket. An interaction with RNA region spans residues 165-170 (RHNKRR). Substrate is bound by residues aspartate 195 and 230-233 (TKFE).

It belongs to the class I-like SAM-binding methyltransferase superfamily. TrmB family.

The catalysed reaction is guanosine(46) in tRNA + S-adenosyl-L-methionine = N(7)-methylguanosine(46) in tRNA + S-adenosyl-L-homocysteine. Its pathway is tRNA modification; N(7)-methylguanine-tRNA biosynthesis. Catalyzes the formation of N(7)-methylguanine at position 46 (m7G46) in tRNA. In Acidovorax sp. (strain JS42), this protein is tRNA (guanine-N(7)-)-methyltransferase.